The chain runs to 188 residues: MSSDLILAPQPLINTKASELPSQSGSPPPEIVYPFQFTIASLGVEPTADFVSIAAQAAITAYTSLYRHAILTDLQAIIHPNGYAPAFPTSVALAWVPYNSTATAAKILDVFGGQEFCVGGSINSTSPIIVPCPLTNINPIIKDSVTYTDTPKLLIYSTAPSYSTSATCTLTIRGKVRLHSPLLSSSSS.

Belongs to the tymoviruses capsid protein family.

The protein localises to the virion. Functionally, self-assembles to form a T=3 icosahedral capsid composed of 180 copies of the capsid protein. The capsid encapsulates the single-stranded RNA genome. The protein is Capsid protein of Theobroma cacao (Cacao).